Reading from the N-terminus, the 1342-residue chain is DNA-directed RNA polymerase subunit beta (1342 aa).

It belongs to the RNA polymerase beta chain family. In terms of assembly, the RNAP catalytic core consists of 2 alpha, 1 beta, 1 beta' and 1 omega subunit. When a sigma factor is associated with the core the holoenzyme is formed, which can initiate transcription.

It catalyses the reaction RNA(n) + a ribonucleoside 5'-triphosphate = RNA(n+1) + diphosphate. Its function is as follows. DNA-dependent RNA polymerase catalyzes the transcription of DNA into RNA using the four ribonucleoside triphosphates as substrates. This Vibrio campbellii (strain ATCC BAA-1116) protein is DNA-directed RNA polymerase subunit beta.